The sequence spans 178 residues: Large ribosomal subunit protein uL6 (178 aa).

This sequence belongs to the universal ribosomal protein uL6 family. Part of the 50S ribosomal subunit.

This protein binds to the 23S rRNA, and is important in its secondary structure. It is located near the subunit interface in the base of the L7/L12 stalk, and near the tRNA binding site of the peptidyltransferase center. The polypeptide is Large ribosomal subunit protein uL6 (Coxiella burnetii (strain CbuG_Q212) (Coxiella burnetii (strain Q212))).